Here is a 280-residue protein sequence, read N- to C-terminus: Nuclear egress protein 1 (280 aa).

The CCCH-type zinc-finger motif lies at 86-203; sequence CLTLSPYGHS…YIIFTSLTLH (118 aa).

This sequence belongs to the herpesviridae NEC1 protein family. Forms a heterohexameric complex with NEC2. Interacts with capsid vertex specific component 2/CVC2; this interaction directs the capsid to the host inner nuclear membrane to initiate budding. In terms of processing, phosphorylated at serine residues in the N-terminus. This phosphorylation regulates the localization within the inner nuclear membrane.

It localises to the host nucleus inner membrane. Its function is as follows. Plays an essential role in virion nuclear egress, the first step of virion release from infected cell. Within the host nucleus, NEC1 interacts with the newly formed capsid through the vertexes and directs it to the inner nuclear membrane by associating with NEC2. Induces the budding of the capsid at the inner nuclear membrane as well as its envelopment into the perinuclear space. There, the NEC1/NEC2 complex promotes the fusion of the enveloped capsid with the outer nuclear membrane and the subsequent release of the viral capsid into the cytoplasm where it will reach the secondary budding sites in the host Golgi or trans-Golgi network. This Alcelaphine herpesvirus 1 (strain C500) (AlHV-1) protein is Nuclear egress protein 1.